The primary structure comprises 188 residues: Elongation factor P (188 aa).

This sequence belongs to the elongation factor P family.

The protein localises to the cytoplasm. The protein operates within protein biosynthesis; polypeptide chain elongation. Functionally, involved in peptide bond synthesis. Stimulates efficient translation and peptide-bond synthesis on native or reconstituted 70S ribosomes in vitro. Probably functions indirectly by altering the affinity of the ribosome for aminoacyl-tRNA, thus increasing their reactivity as acceptors for peptidyl transferase. The chain is Elongation factor P from Rhodopseudomonas palustris (strain BisA53).